The primary structure comprises 104 residues: Large ribosomal subunit protein bL21 (104 aa).

Residues 81–90 (QGYRRHHGHR) show a composition bias toward basic residues. The segment at 81-104 (QGYRRHHGHRQPYTQVKITGISAG) is disordered.

This sequence belongs to the bacterial ribosomal protein bL21 family. Part of the 50S ribosomal subunit. Contacts protein L20.

This protein binds to 23S rRNA in the presence of protein L20. This chain is Large ribosomal subunit protein bL21, found in Halorhodospira halophila (strain DSM 244 / SL1) (Ectothiorhodospira halophila (strain DSM 244 / SL1)).